Reading from the N-terminus, the 329-residue chain is Serpentine receptor class alpha-7 (329 aa).

The next 7 membrane-spanning stretches (helical) occupy residues 25 to 45, 57 to 77, 104 to 124, 143 to 163, 187 to 207, 237 to 257, and 273 to 293; these read YVYLSLISLTFIFSYFAVKIV, ILLFHNLVSANLHQLLYLFSA, YLKVLVTGISGMIYGQTGLLL, VGIAISIAILFLSLITGKIII, RLFASIYTFISSFNLVFSVLL, TICFLTFVQFIFMFIYSFGIF, and FIVVWFYTIPFIAALFPILLV.

The protein belongs to the nematode receptor-like protein sra family.

The protein resides in the membrane. This Caenorhabditis elegans protein is Serpentine receptor class alpha-7 (sra-7).